Reading from the N-terminus, the 227-residue chain is Cytochrome c oxidase subunit 2 (227 aa).

Topologically, residues 1–14 are mitochondrial intermembrane; that stretch reads MAYPLQMGLQDATS. The chain crosses the membrane as a helical span at residues 15-45; sequence PIMEELLHFHDHTLMIVFLISSLVLYIISLM. The Mitochondrial matrix segment spans residues 46-59; sequence LTTKLTHTSTMDAQ. Residues 60–87 traverse the membrane as a helical segment; it reads EVETVWTILPAIILILIALPSLRILYMM. Over 88–227 the chain is Mitochondrial intermembrane; that stretch reads DEINNPSLTV…HFEKWSTSML (140 aa). 6 residues coordinate Cu cation: His161, Cys196, Glu198, Cys200, His204, and Met207. Glu198 is a Mg(2+) binding site.

The protein belongs to the cytochrome c oxidase subunit 2 family. Component of the cytochrome c oxidase (complex IV, CIV), a multisubunit enzyme composed of 14 subunits. The complex is composed of a catalytic core of 3 subunits MT-CO1, MT-CO2 and MT-CO3, encoded in the mitochondrial DNA, and 11 supernumerary subunits COX4I, COX5A, COX5B, COX6A, COX6B, COX6C, COX7A, COX7B, COX7C, COX8 and NDUFA4, which are encoded in the nuclear genome. The complex exists as a monomer or a dimer and forms supercomplexes (SCs) in the inner mitochondrial membrane with NADH-ubiquinone oxidoreductase (complex I, CI) and ubiquinol-cytochrome c oxidoreductase (cytochrome b-c1 complex, complex III, CIII), resulting in different assemblies (supercomplex SCI(1)III(2)IV(1) and megacomplex MCI(2)III(2)IV(2)). Found in a complex with TMEM177, COA6, COX18, COX20, SCO1 and SCO2. Interacts with TMEM177 in a COX20-dependent manner. Interacts with COX20. Interacts with COX16. Requires Cu cation as cofactor.

It is found in the mitochondrion inner membrane. It catalyses the reaction 4 Fe(II)-[cytochrome c] + O2 + 8 H(+)(in) = 4 Fe(III)-[cytochrome c] + 2 H2O + 4 H(+)(out). In terms of biological role, component of the cytochrome c oxidase, the last enzyme in the mitochondrial electron transport chain which drives oxidative phosphorylation. The respiratory chain contains 3 multisubunit complexes succinate dehydrogenase (complex II, CII), ubiquinol-cytochrome c oxidoreductase (cytochrome b-c1 complex, complex III, CIII) and cytochrome c oxidase (complex IV, CIV), that cooperate to transfer electrons derived from NADH and succinate to molecular oxygen, creating an electrochemical gradient over the inner membrane that drives transmembrane transport and the ATP synthase. Cytochrome c oxidase is the component of the respiratory chain that catalyzes the reduction of oxygen to water. Electrons originating from reduced cytochrome c in the intermembrane space (IMS) are transferred via the dinuclear copper A center (CU(A)) of subunit 2 and heme A of subunit 1 to the active site in subunit 1, a binuclear center (BNC) formed by heme A3 and copper B (CU(B)). The BNC reduces molecular oxygen to 2 water molecules using 4 electrons from cytochrome c in the IMS and 4 protons from the mitochondrial matrix. In Halichoerus grypus (Gray seal), this protein is Cytochrome c oxidase subunit 2 (MT-CO2).